A 40-amino-acid polypeptide reads, in one-letter code: Photosystem II reaction center protein J (40 aa).

The chain crosses the membrane as a helical span at residues 8-28 (IPLWLIGTVAGILIIGLLGVF).

It belongs to the PsbJ family. PSII is composed of 1 copy each of membrane proteins PsbA, PsbB, PsbC, PsbD, PsbE, PsbF, PsbH, PsbI, PsbJ, PsbK, PsbL, PsbM, PsbT, PsbX, PsbY, PsbZ, Psb30/Ycf12, at least 3 peripheral proteins of the oxygen-evolving complex and a large number of cofactors. It forms dimeric complexes.

It is found in the plastid. The protein resides in the chloroplast thylakoid membrane. Functionally, one of the components of the core complex of photosystem II (PSII). PSII is a light-driven water:plastoquinone oxidoreductase that uses light energy to abstract electrons from H(2)O, generating O(2) and a proton gradient subsequently used for ATP formation. It consists of a core antenna complex that captures photons, and an electron transfer chain that converts photonic excitation into a charge separation. The sequence is that of Photosystem II reaction center protein J from Nandina domestica (Heavenly bamboo).